A 356-amino-acid polypeptide reads, in one-letter code: Pyruvate dehydrogenase E1 component subunit beta, mitochondrial (356 aa).

The N-terminal 25 residues, 1–25 (MLSSILKKIQPSLLVNFRIITRTYA), are a transit peptide targeting the mitochondrion. Glu85 contacts thiamine diphosphate. The K(+) site is built by Ile138, Ala186, Ile187, Asp189, and Asn191.

In terms of assembly, tetramer of 2 alpha and 2 beta subunits. The cofactor is thiamine diphosphate.

It is found in the mitochondrion matrix. It catalyses the reaction N(6)-[(R)-lipoyl]-L-lysyl-[protein] + pyruvate + H(+) = N(6)-[(R)-S(8)-acetyldihydrolipoyl]-L-lysyl-[protein] + CO2. In terms of biological role, the pyruvate dehydrogenase complex catalyzes the overall conversion of pyruvate to acetyl-CoA and CO(2). It contains multiple copies of three enzymatic components: pyruvate dehydrogenase (E1), dihydrolipoamide acetyltransferase (E2) and lipoamide dehydrogenase (E3). The polypeptide is Pyruvate dehydrogenase E1 component subunit beta, mitochondrial (pdhB) (Dictyostelium discoideum (Social amoeba)).